The sequence spans 89 residues: Small ribosomal subunit protein bS20 (89 aa).

The protein belongs to the bacterial ribosomal protein bS20 family.

In terms of biological role, binds directly to 16S ribosomal RNA. The sequence is that of Small ribosomal subunit protein bS20 from Wolbachia sp. subsp. Drosophila simulans (strain wRi).